Reading from the N-terminus, the 1564-residue chain is Nucleoporin nup184 (1564 aa).

Its subcellular location is the nucleus. The protein localises to the nuclear pore complex. In terms of biological role, interacts with pom152 in the core structure of the nuclear pore complex (NPC). Involved in the export of mRNA. This chain is Nucleoporin nup184 (nup184), found in Schizosaccharomyces pombe (strain 972 / ATCC 24843) (Fission yeast).